A 190-amino-acid chain; its full sequence is Probable nicotinate-nucleotide adenylyltransferase (190 aa).

The protein belongs to the NadD family.

It catalyses the reaction nicotinate beta-D-ribonucleotide + ATP + H(+) = deamido-NAD(+) + diphosphate. It functions in the pathway cofactor biosynthesis; NAD(+) biosynthesis; deamido-NAD(+) from nicotinate D-ribonucleotide: step 1/1. In terms of biological role, catalyzes the reversible adenylation of nicotinate mononucleotide (NaMN) to nicotinic acid adenine dinucleotide (NaAD). In Frankia alni (strain DSM 45986 / CECT 9034 / ACN14a), this protein is Probable nicotinate-nucleotide adenylyltransferase.